Reading from the N-terminus, the 1179-residue chain is DNA-directed RNA polymerase subunit beta (1179 aa).

Over residues 1153–1162 the composition is skewed to acidic residues; sequence MREMEDEDEG. The interval 1153–1179 is disordered; the sequence is MREMEDEDEGNGEKLNLVLEGGSLNEE.

The protein belongs to the RNA polymerase beta chain family. As to quaternary structure, the RNAP catalytic core consists of 2 alpha, 1 beta, 1 beta' and 1 omega subunit. When a sigma factor is associated with the core the holoenzyme is formed, which can initiate transcription.

The enzyme catalyses RNA(n) + a ribonucleoside 5'-triphosphate = RNA(n+1) + diphosphate. Its function is as follows. DNA-dependent RNA polymerase catalyzes the transcription of DNA into RNA using the four ribonucleoside triphosphates as substrates. The sequence is that of DNA-directed RNA polymerase subunit beta from Brevibacillus brevis (strain 47 / JCM 6285 / NBRC 100599).